The following is a 141-amino-acid chain: Nucleoside diphosphate kinase (141 aa).

Residues K11, F59, R87, T93, R104, and N114 each contribute to the ATP site. The active-site Pros-phosphohistidine intermediate is the H117.

It belongs to the NDK family. Homotetramer. It depends on Mg(2+) as a cofactor.

It is found in the cytoplasm. The enzyme catalyses a 2'-deoxyribonucleoside 5'-diphosphate + ATP = a 2'-deoxyribonucleoside 5'-triphosphate + ADP. The catalysed reaction is a ribonucleoside 5'-diphosphate + ATP = a ribonucleoside 5'-triphosphate + ADP. Major role in the synthesis of nucleoside triphosphates other than ATP. The ATP gamma phosphate is transferred to the NDP beta phosphate via a ping-pong mechanism, using a phosphorylated active-site intermediate. This chain is Nucleoside diphosphate kinase, found in Bordetella avium (strain 197N).